A 258-amino-acid polypeptide reads, in one-letter code: Acyl-[acyl-carrier-protein]--UDP-N-acetylglucosamine O-acyltransferase (258 aa).

Belongs to the transferase hexapeptide repeat family. LpxA subfamily. Homotrimer.

It is found in the cytoplasm. The enzyme catalyses a (3R)-hydroxyacyl-[ACP] + UDP-N-acetyl-alpha-D-glucosamine = a UDP-3-O-[(3R)-3-hydroxyacyl]-N-acetyl-alpha-D-glucosamine + holo-[ACP]. Its pathway is glycolipid biosynthesis; lipid IV(A) biosynthesis; lipid IV(A) from (3R)-3-hydroxytetradecanoyl-[acyl-carrier-protein] and UDP-N-acetyl-alpha-D-glucosamine: step 1/6. Functionally, involved in the biosynthesis of lipid A, a phosphorylated glycolipid that anchors the lipopolysaccharide to the outer membrane of the cell. The protein is Acyl-[acyl-carrier-protein]--UDP-N-acetylglucosamine O-acyltransferase of Saccharophagus degradans (strain 2-40 / ATCC 43961 / DSM 17024).